The chain runs to 414 residues: Tryptophan synthase beta chain (414 aa).

Positions 1 to 26 are disordered; the sequence is MVSTFSRQDQNYKNDDLNQPSKEGRF. The segment covering 10–26 has biased composition (basic and acidic residues); that stretch reads QNYKNDDLNQPSKEGRF. The residue at position 109 (Lys109) is an N6-(pyridoxal phosphate)lysine.

The protein belongs to the TrpB family. Tetramer of two alpha and two beta chains. Requires pyridoxal 5'-phosphate as cofactor.

It carries out the reaction (1S,2R)-1-C-(indol-3-yl)glycerol 3-phosphate + L-serine = D-glyceraldehyde 3-phosphate + L-tryptophan + H2O. The protein operates within amino-acid biosynthesis; L-tryptophan biosynthesis; L-tryptophan from chorismate: step 5/5. In terms of biological role, the beta subunit is responsible for the synthesis of L-tryptophan from indole and L-serine. The protein is Tryptophan synthase beta chain of Prochlorococcus marinus (strain MIT 9312).